Here is a 146-residue protein sequence, read N- to C-terminus: Ribonuclease H (146 aa).

One can recognise an RNase H type-1 domain in the interval 1–143 (MRKKIIIYTD…CDYLARQAIK (143 aa)). 4 residues coordinate Mg(2+): Asp10, Glu48, Asp70, and Asp135.

This sequence belongs to the RNase H family. As to quaternary structure, monomer. It depends on Mg(2+) as a cofactor.

It is found in the cytoplasm. The enzyme catalyses Endonucleolytic cleavage to 5'-phosphomonoester.. In terms of biological role, endonuclease that specifically degrades the RNA of RNA-DNA hybrids. This chain is Ribonuclease H, found in Prosthecochloris aestuarii (strain DSM 271 / SK 413).